Consider the following 261-residue polypeptide: Probable membrane transporter protein XF_0764 (261 aa).

Helical transmembrane passes span 6-26, 29-49, 78-98, 99-119, 150-170, 175-195, 205-225, and 239-259; these read LIVT…LGGG, ILAT…IAIG, VIFA…GMLI, DGQR…LLML, AASG…LIFA, TINA…ITTL, WTIA…GTLL, and VFGL…WASL.

This sequence belongs to the 4-toluene sulfonate uptake permease (TSUP) (TC 2.A.102) family.

The protein resides in the cell membrane. This chain is Probable membrane transporter protein XF_0764, found in Xylella fastidiosa (strain 9a5c).